The primary structure comprises 157 residues: Probable succinate transporter subunit YjjB (157 aa).

A run of 4 helical transmembrane segments spans residues 6–26, 51–71, 87–107, and 129–149; these read IILT…GFAM, VLMI…ILVG, VFTV…VAMI, and FLKA…PGLW.

Belongs to the ThrE exporter (TC 2.A.79) family. The transporter is composed of YjjB and YjjP.

The protein resides in the cell inner membrane. In terms of biological role, involved in succinate export with YjjP. Both proteins are required for export. The sequence is that of Probable succinate transporter subunit YjjB from Proteus mirabilis (strain HI4320).